Consider the following 281-residue polypeptide: Ermin (281 aa).

3 stretches are compositionally biased toward polar residues: residues 1 to 12 (MTDTPETLSGTE), 21 to 31 (NGQQPSSQTRQ), and 135 to 147 (AQQQ…DAST). 3 disordered regions span residues 1–80 (MTDT…KILN), 110–147 (REGH…DAST), and 167–248 (KCDE…GDIA). The span at 169 to 197 (DEEEEEEEEVWNEEINEEDVDECAEEEDE) shows a compositional bias: acidic residues. Basic and acidic residues predominate over residues 198–223 (VRVIEFKRKHREGSPLKEESLAREDS). Phosphoserine is present on residues Ser-211, Ser-223, Ser-227, and Ser-230. Thr-234 is subject to Phosphothreonine. The segment at 262-281 (KIRKGNTKQRIDEFESMMHL) is binds actin.

In terms of assembly, binds actin. As to expression, brain and spinal cord. Exclusively expressed by the oligodendrocytes. Appears at a late stage during myelination, and in the mature nerves, it is localized to the outer cytoplasmic lip of the myelin sheath and the paranodal loops.

Its subcellular location is the cytoplasm. The protein localises to the cytoskeleton. Functionally, plays a role in cytoskeletal rearrangements during the late wrapping and/or compaction phases of myelinogenesis as well as in maintenance and stability of myelin sheath in the adult. May play an important role in late-stage oligodendroglia maturation, myelin/Ranvier node formation during CNS development, and in the maintenance and plasticity of related structures in the mature CNS. This Mus musculus (Mouse) protein is Ermin (Ermn).